A 245-amino-acid chain; its full sequence is Tetraspanin-16 (245 aa).

Over 1–13 (MAEIHTPYSSLKK) the chain is Cytoplasmic. Residues 14–34 (LLSLLNGFVAVSGIILVGLGI) traverse the membrane as a helical segment. The Extracellular portion of the chain corresponds to 35-37 (GGK). A helical transmembrane segment spans residues 38–58 (CGGASLTNVLGLSSAYLLHVG). Asn-59 is a topological domain (cytoplasmic). A helical membrane pass occupies residues 60–80 (LCLVMGCITVLLGCAGWYGAT). Over 81–94 (KESRGTLLFCILSM) the chain is Extracellular. The chain crosses the membrane as a helical span at residues 95–115 (VIVLIMEVTAATVVLLFFPIV). The Cytoplasmic portion of the chain corresponds to 116–245 (GDVALEHTFV…VAQAGLELLA (130 aa)).

It belongs to the tetraspanin (TM4SF) family. As to expression, broadly expressed in most human tissues and cell lines including neural and bone marrow derived tissues.

It is found in the membrane. The chain is Tetraspanin-16 (TSPAN16) from Homo sapiens (Human).